The sequence spans 365 residues: Peptide chain release factor 2 (365 aa).

At Gln252 the chain carries N5-methylglutamine.

It belongs to the prokaryotic/mitochondrial release factor family. In terms of processing, methylated by PrmC. Methylation increases the termination efficiency of RF2.

The protein localises to the cytoplasm. Functionally, peptide chain release factor 2 directs the termination of translation in response to the peptide chain termination codons UGA and UAA. The polypeptide is Peptide chain release factor 2 (Proteus mirabilis (strain HI4320)).